An 82-amino-acid polypeptide reads, in one-letter code: Small ribosomal subunit protein bS16 (82 aa).

The protein belongs to the bacterial ribosomal protein bS16 family.

The polypeptide is Small ribosomal subunit protein bS16 (Shigella boydii serotype 18 (strain CDC 3083-94 / BS512)).